The following is a 160-amino-acid chain: Cytochrome b6-f complex subunit 4 (160 aa).

3 helical membrane-spanning segments follow: residues leucine 36–valine 56, leucine 95–glutamate 115, and threonine 131–isoleucine 151.

It belongs to the cytochrome b family. PetD subfamily. In terms of assembly, the 4 large subunits of the cytochrome b6-f complex are cytochrome b6, subunit IV (17 kDa polypeptide, petD), cytochrome f and the Rieske protein, while the 4 small subunits are petG, petL, petM and petN. The complex functions as a dimer.

It localises to the plastid. Its subcellular location is the chloroplast thylakoid membrane. Its function is as follows. Component of the cytochrome b6-f complex, which mediates electron transfer between photosystem II (PSII) and photosystem I (PSI), cyclic electron flow around PSI, and state transitions. This chain is Cytochrome b6-f complex subunit 4, found in Coleochaete orbicularis (Charophycean green alga).